The following is a 465-amino-acid chain: Cysteine--tRNA ligase (465 aa).

Position 27 (C27) interacts with Zn(2+). Positions 29–39 (PTVYNFFHIGN) match the 'HIGH' region motif. Residues C207, H232, and E236 each contribute to the Zn(2+) site. The 'KMSKS' region signature appears at 264-268 (KMSKS). K267 lines the ATP pocket.

The protein belongs to the class-I aminoacyl-tRNA synthetase family. In terms of assembly, monomer. Zn(2+) serves as cofactor.

The protein resides in the cytoplasm. It catalyses the reaction tRNA(Cys) + L-cysteine + ATP = L-cysteinyl-tRNA(Cys) + AMP + diphosphate. This is Cysteine--tRNA ligase from Clostridium botulinum (strain 657 / Type Ba4).